The sequence spans 974 residues: Kinesin-like protein KIN-7A (974 aa).

Positions 1–29 (MTIKTPGTPVSKMDRTPAVTPGGSSRSRE) are disordered. The region spanning 31-353 (KIVVTVRLRP…LYFANRAKEV (323 aa)) is the Kinesin motor domain. 117-124 (GQTSSGKT) is an ATP binding site. Coiled coils occupy residues 362–435 (VVSD…KGLN) and 565–603 (SANL…VMSL). Disordered stretches follow at residues 605–649 (SNIS…PCSP) and 663–713 (NKAP…SSVN). Positions 616 to 628 (TKNHHHQSKKKKL) are enriched in basic residues. Polar residues-rich tracts occupy residues 638–649 (NRQNFLKSPCSP) and 666–682 (PQEN…TPQG). A compositionally biased stretch (basic and acidic residues) spans 683–693 (SEKETPQKGEE).

It belongs to the TRAFAC class myosin-kinesin ATPase superfamily. Kinesin family. KIN-7 subfamily. In terms of processing, phosphorylated at Thr-145, Thr-687 and Thr-703 by CDKAs and CDKBs. Phosphorylated NACK1 fails to mediate cytokinesis. In terms of tissue distribution, expressed in roots, flowers, pollen mother cells and embryos.

Its subcellular location is the cytoplasm. It is found in the cytoskeleton. The protein localises to the phragmoplast. Probable plus end-directed motor protein that functions in the NACK-PQR (ANP1-MKK6-MPK4) MAP kinase signaling pathway, which is essential for somatic cell cytokinesis, especially for the cell-plate formation and its expansion. Regulates the activity and the localization of ANP1, probably by association through the non-catalytic region of the kinase. Functionally redundant with NACK2 and essential to promote the progression of cytokinesis and for cellularization (formation of the cell plate) during microgametogenesis and megagametogenesis. This Arabidopsis thaliana (Mouse-ear cress) protein is Kinesin-like protein KIN-7A.